A 216-amino-acid polypeptide reads, in one-letter code: MAGEIPDLIAEARTGTGKGAARQARREGNVPGIVYGGGIDPLAINIPFNVLLKRLKDGRFLSTLFNMKVEGQDDVRVICRNVQRDVVKDLPTHVDFMRLKRTSKIALFIPVEVIGEEECPGLKKGGVLTMVRPEVELRVTAGDIPEQITIDLTGLEIGDTVTISSVELPAGAKATIDRDFVIANLTAPSGLVSAESEEDEDAPAADEVPATEVSEE.

The segment at 191–216 is disordered; it reads LVSAESEEDEDAPAADEVPATEVSEE. A compositionally biased stretch (acidic residues) spans 195 to 204; sequence ESEEDEDAPA.

The protein belongs to the bacterial ribosomal protein bL25 family. CTC subfamily. In terms of assembly, part of the 50S ribosomal subunit; part of the 5S rRNA/L5/L18/L25 subcomplex. Contacts the 5S rRNA. Binds to the 5S rRNA independently of L5 and L18.

This is one of the proteins that binds to the 5S RNA in the ribosome where it forms part of the central protuberance. The polypeptide is Large ribosomal subunit protein bL25 (Jannaschia sp. (strain CCS1)).